Consider the following 100-residue polypeptide: Large ribosomal subunit protein uL23 (100 aa).

Belongs to the universal ribosomal protein uL23 family. As to quaternary structure, part of the 50S ribosomal subunit. Contacts protein L29, and trigger factor when it is bound to the ribosome.

In terms of biological role, one of the early assembly proteins it binds 23S rRNA. One of the proteins that surrounds the polypeptide exit tunnel on the outside of the ribosome. Forms the main docking site for trigger factor binding to the ribosome. The sequence is that of Large ribosomal subunit protein uL23 from Mycobacterium marinum (strain ATCC BAA-535 / M).